The following is a 214-amino-acid chain: MRIILLGAPGAGKGTQAQFIMEKYGIPQISTGDMLRAAVKAGTELGKQAKEIMDAGKLVTDELVIALVKERIAQDDCRNGFLLDGFPRTIPQADAMKDVGINVDYVIEFAVPDELIIDRIVGRRVHAASGRVYHVKFNPPKVEGKDDVTGEDLTIRKDDHEDTVRKRLVEYHQQTAPLVSYYQKEADAGNTRYFKVEGTRKVEEVRAELETILG.

Position 10–15 (10–15) interacts with ATP; that stretch reads GAGKGT. Residues 30-59 form an NMP region; the sequence is STGDMLRAAVKAGTELGKQAKEIMDAGKLV. AMP is bound by residues Thr-31, Arg-36, 57–59, 85–88, and Gln-92; these read KLV and GFPR. An LID region spans residues 122–159; that stretch reads GRRVHAASGRVYHVKFNPPKVEGKDDVTGEDLTIRKDD. Residues Arg-123 and 132-133 each bind ATP; that span reads VY. The AMP site is built by Arg-156 and Arg-167. Residue Arg-200 participates in ATP binding.

The protein belongs to the adenylate kinase family. Monomer.

Its subcellular location is the cytoplasm. It catalyses the reaction AMP + ATP = 2 ADP. It functions in the pathway purine metabolism; AMP biosynthesis via salvage pathway; AMP from ADP: step 1/1. Catalyzes the reversible transfer of the terminal phosphate group between ATP and AMP. Plays an important role in cellular energy homeostasis and in adenine nucleotide metabolism. The chain is Adenylate kinase from Pectobacterium carotovorum subsp. carotovorum (strain PC1).